The primary structure comprises 473 residues: Glycosyl hydrolase family 109 protein 2 (473 aa).

The tat-type signal signal peptide spans Met1 to Ala31. NAD(+) contacts are provided by residues Gly77–Arg78, Asp99, Trp148–His151, Glu168–Val169, and Asn197. Substrate is bound by residues Tyr226, Arg244, Tyr256 to His259, and Tyr339. Tyr256 is a binding site for NAD(+).

The protein belongs to the Gfo/Idh/MocA family. Glycosyl hydrolase 109 subfamily. Requires NAD(+) as cofactor. Predicted to be exported by the Tat system. The position of the signal peptide cleavage has not been experimentally proven.

Functionally, glycosidase. The protein is Glycosyl hydrolase family 109 protein 2 of Akkermansia muciniphila (strain ATCC BAA-835 / DSM 22959 / JCM 33894 / BCRC 81048 / CCUG 64013 / CIP 107961 / Muc).